A 172-amino-acid polypeptide reads, in one-letter code: Ribosome maturation factor RimP (172 aa).

This sequence belongs to the RimP family.

The protein localises to the cytoplasm. Its function is as follows. Required for maturation of 30S ribosomal subunits. The sequence is that of Ribosome maturation factor RimP from Chlorobium phaeovibrioides (strain DSM 265 / 1930) (Prosthecochloris vibrioformis (strain DSM 265)).